A 157-amino-acid chain; its full sequence is Deoxyuridine 5'-triphosphate nucleotidohydrolase (157 aa).

Substrate-binding positions include 73-75 (RSG), Asn-86, and 90-92 (TID).

The protein belongs to the dUTPase family. It depends on Mg(2+) as a cofactor.

The enzyme catalyses dUTP + H2O = dUMP + diphosphate + H(+). The protein operates within pyrimidine metabolism; dUMP biosynthesis; dUMP from dCTP (dUTP route): step 2/2. Its function is as follows. This enzyme is involved in nucleotide metabolism: it produces dUMP, the immediate precursor of thymidine nucleotides and it decreases the intracellular concentration of dUTP so that uracil cannot be incorporated into DNA. In Azorhizobium caulinodans (strain ATCC 43989 / DSM 5975 / JCM 20966 / LMG 6465 / NBRC 14845 / NCIMB 13405 / ORS 571), this protein is Deoxyuridine 5'-triphosphate nucleotidohydrolase.